A 154-amino-acid chain; its full sequence is Probable chemoreceptor glutamine deamidase CheD (154 aa).

It belongs to the CheD family.

The catalysed reaction is L-glutaminyl-[protein] + H2O = L-glutamyl-[protein] + NH4(+). Functionally, probably deamidates glutamine residues to glutamate on methyl-accepting chemotaxis receptors (MCPs), playing an important role in chemotaxis. This chain is Probable chemoreceptor glutamine deamidase CheD, found in Methanococcus maripaludis (strain C6 / ATCC BAA-1332).